The sequence spans 895 residues: La RNA-binding domain-containing protein LHP1 (895 aa).

Disordered regions lie at residues 24 to 265 (ANGN…PPPS), 285 to 344 (SATS…HDAT), 359 to 590 (GEDK…LGHG), 796 to 857 (PDAA…AQDV), and 870 to 895 (VNGEIKEKEEVKAMENEGEESENYEQ). Residues 31–75 (SSPSSSSSATPEPTSLSSSTSGKKAFSTATSKSGQQKQGSSPQPG) are compositionally biased toward low complexity. Residues 95–143 (QRTDRSEEKEKRGSSSKNWRERSHRDEKNQDDGEKRNGRERSKKEKGDK) show a composition bias toward basic and acidic residues. The span at 152–170 (SATSSEKTAKSLSSSTKNA) shows a compositional bias: low complexity. 2 stretches are compositionally biased toward polar residues: residues 172–184 (GVTSSSQGENPIA) and 192–216 (KAQNDSTFRSSSAAAPVGPTTSTIN). The span at 228–244 (DNWRARPAKVEKNEKTE) shows a compositional bias: basic and acidic residues. Residues 251–260 (QAQPQPQRQL) show a composition bias toward low complexity. Residues 296–314 (KSDKEKSLTNGMVKEEDSG) are compositionally biased toward basic and acidic residues. The span at 325 to 336 (AAAAAAAGTSST) shows a compositional bias: low complexity. Composition is skewed to basic and acidic residues over residues 359–371 (GEDKKEKAKERLN), 405–428 (HAAEQSRRQNRMEAKKRSSGREGG), 452–468 (EGKKARKEGAQQKDGHA), and 485–495 (GDVKETKEGDA). Positions 496 to 508 (RSASQQESSSHRS) are enriched in low complexity. Polar residues predominate over residues 510–521 (PSISASANTGID). Residues 563 to 572 (RGSFGGGRAR) are compositionally biased toward gly residues. In terms of domain architecture, HTH La-type RNA-binding spans 706–796 (VPNLDPLRFY…GAESHRWVLP (91 aa)). Phosphoserine is present on S847. Residues 873–884 (EIKEKEEVKAME) show a composition bias toward basic and acidic residues. Over residues 885–895 (NEGEESENYEQ) the composition is skewed to acidic residues.

In terms of biological role, may act as an RNA-binding protein. This is La RNA-binding domain-containing protein LHP1 from Cryptococcus neoformans var. grubii serotype A (strain H99 / ATCC 208821 / CBS 10515 / FGSC 9487) (Filobasidiella neoformans var. grubii).